A 169-amino-acid chain; its full sequence is Centrosomal protein 20 (169 aa).

Residues 1–104 (MATVGDLKAV…VVEDLNSQSV (104 aa)) are necessary and sufficient for homooligomerization and localization to centrosomes and pericentriolar satellites. Residues 49-81 (ENLLINELIREYLAFNKYSYTSSVLTAETGLSE) form the LisH domain. The segment at 135–169 (TFRNIPRGRNTKDTHSGPVQLTQTSTEDWHQRRHR) is disordered. A compositionally biased stretch (polar residues) spans 151 to 160 (GPVQLTQTST).

Belongs to the CEP43 family. Homooligomer; probably required for localization to centrosomes.

It is found in the cell projection. The protein localises to the cilium. The protein resides in the cytoplasm. Its subcellular location is the cytoskeleton. It localises to the cilium basal body. It is found in the microtubule organizing center. The protein localises to the centrosome. The protein resides in the cytoplasmic granule. Its subcellular location is the centriolar satellite. In terms of biological role, involved in the biogenesis of cilia. Required for the recruitment of PLK1 to centrosomes and S phase progression. In Xenopus laevis (African clawed frog), this protein is Centrosomal protein 20 (Cep20).